Here is a 379-residue protein sequence, read N- to C-terminus: AT-rich binding protein (379 aa).

Residues 29–52 (IVCHTCQEELQTQDQFWKHIQDEH) form a C2H2-type 1 zinc finger. The span at 114–124 (EQREVELHEAH) shows a compositional bias: basic and acidic residues. 2 disordered regions span residues 114–148 (EQRE…DAAK) and 221–267 (PTAS…STTL). 3 stretches are compositionally biased toward low complexity: residues 125–143 (QQQQ…QQQQ), 223–242 (ASFV…TTPP), and 249–262 (QQQQ…QQQQ). 2 consecutive C2H2-type zinc fingers follow at residues 312–336 (YICD…RVVH) and 342–365 (FNCD…KKKH).

Its subcellular location is the nucleus. In terms of biological role, may be a transcription factor for genes having (A+T) stretches in their promoter and/or enhancer regions. Binds to AT rich DNA. In Drosophila willistoni (Fruit fly), this protein is AT-rich binding protein.